Here is a 485-residue protein sequence, read N- to C-terminus: Ribosomal protein uS12 methylthiotransferase RimO (485 aa).

One can recognise an MTTase N-terminal domain in the interval 14-124 (PKVGFISLGC…VMAHVRELLP (111 aa)). Residues C23, C59, C88, C167, C171, and C174 each coordinate [4Fe-4S] cluster. A Radical SAM core domain is found at 153 to 389 (LTPRHYAYVK…MEVAQRISRE (237 aa)). The TRAM domain maps to 392-468 (AEKVGRVLDV…EYDLYGEVIH (77 aa)).

This sequence belongs to the methylthiotransferase family. RimO subfamily. It depends on [4Fe-4S] cluster as a cofactor.

The protein localises to the cytoplasm. The enzyme catalyses L-aspartate(89)-[ribosomal protein uS12]-hydrogen + (sulfur carrier)-SH + AH2 + 2 S-adenosyl-L-methionine = 3-methylsulfanyl-L-aspartate(89)-[ribosomal protein uS12]-hydrogen + (sulfur carrier)-H + 5'-deoxyadenosine + L-methionine + A + S-adenosyl-L-homocysteine + 2 H(+). In terms of biological role, catalyzes the methylthiolation of an aspartic acid residue of ribosomal protein uS12. This Deinococcus geothermalis (strain DSM 11300 / CIP 105573 / AG-3a) protein is Ribosomal protein uS12 methylthiotransferase RimO.